We begin with the raw amino-acid sequence, 510 residues long: 2,3-bisphosphoglycerate-independent phosphoglycerate mutase (510 aa).

Mn(2+) contacts are provided by Asp12 and Ser62. Ser62 acts as the Phosphoserine intermediate in catalysis. Residues His123, 153 to 154 (RD), Arg185, Arg191, 260 to 263 (RPDR), and Lys335 each bind substrate. 5 residues coordinate Mn(2+): Asp402, His406, Asp443, His444, and His461.

This sequence belongs to the BPG-independent phosphoglycerate mutase family. In terms of assembly, monomer. Requires Mn(2+) as cofactor.

It carries out the reaction (2R)-2-phosphoglycerate = (2R)-3-phosphoglycerate. Its pathway is carbohydrate degradation; glycolysis; pyruvate from D-glyceraldehyde 3-phosphate: step 3/5. Functionally, catalyzes the interconversion of 2-phosphoglycerate and 3-phosphoglycerate. The chain is 2,3-bisphosphoglycerate-independent phosphoglycerate mutase from Listeria monocytogenes serotype 4b (strain F2365).